A 218-amino-acid chain; its full sequence is Eukaryotic translation initiation factor 4E-1 (218 aa).

A compositionally biased stretch (basic and acidic residues) spans 1–11; the sequence is MQTEQPPKESQ. Disordered stretches follow at residues 1 to 20 and 198 to 218; these read MQTE…SEPQ and FSAH…RMSV. Polar residues predominate over residues 206-218; sequence KSGSTRAKTRMSV.

The protein belongs to the eukaryotic initiation factor 4E family. In terms of assembly, eIF4F is a multi-subunit complex, the composition of which varies with external and internal environmental conditions. It is composed of at least eIF4A, eIF4E and eIF4G. eIF4E is also known to interact with other partners.

In terms of biological role, recognizes and binds the 7-methylguanosine-containing mRNA cap during an early step in the initiation of protein synthesis and facilitates ribosome binding by inducing the unwinding of the mRNAs secondary structures. This Schizosaccharomyces pombe (strain 972 / ATCC 24843) (Fission yeast) protein is Eukaryotic translation initiation factor 4E-1 (tif451).